The chain runs to 639 residues: Threonine--tRNA ligase (639 aa).

Residues 1–61 enclose the TGS domain; sequence MIRITLPDNS…DHDARLQIIT (61 aa). Positions 242-533 are catalytic; that stretch reads DHRRLGRELD…LIEQHAGALP (292 aa). Residues cysteine 333, histidine 384, and histidine 510 each contribute to the Zn(2+) site.

It belongs to the class-II aminoacyl-tRNA synthetase family. As to quaternary structure, homodimer. It depends on Zn(2+) as a cofactor.

Its subcellular location is the cytoplasm. It catalyses the reaction tRNA(Thr) + L-threonine + ATP = L-threonyl-tRNA(Thr) + AMP + diphosphate + H(+). In terms of biological role, catalyzes the attachment of threonine to tRNA(Thr) in a two-step reaction: L-threonine is first activated by ATP to form Thr-AMP and then transferred to the acceptor end of tRNA(Thr). Also edits incorrectly charged L-seryl-tRNA(Thr). In Paracidovorax citrulli (strain AAC00-1) (Acidovorax citrulli), this protein is Threonine--tRNA ligase.